A 115-amino-acid chain; its full sequence is UPF0212 protein MJ0068 (115 aa).

Belongs to the UPF0212 family.

The polypeptide is UPF0212 protein MJ0068 (Methanocaldococcus jannaschii (strain ATCC 43067 / DSM 2661 / JAL-1 / JCM 10045 / NBRC 100440) (Methanococcus jannaschii)).